The following is a 132-amino-acid chain: Z-ring associated protein G (132 aa).

A helical transmembrane segment spans residues 1 to 21 (MTWEYALIGLVVGIIIGAVAM). The segment at 95-132 (FRNRLAESEASNDQAPVQMPRDYSEGASGLLRTGAKRD) is disordered.

This sequence belongs to the ZapG family.

It localises to the cell inner membrane. Functionally, involved in cell division, cell envelope biogenesis and cell shape maintenance. The sequence is that of Z-ring associated protein G from Escherichia coli O157:H7.